Consider the following 770-residue polypeptide: MLPSLALLLLAAWTVRALEVPTDGNAGLLAEPQIAMFCGKLNMHMNVQNGKWESDPSGTKTCIGTKEGILQYCQEVYPELQITNVVEANQPVTIQNWCKRGRKQCKTHTHIVIPYRCLVGEFVSDALLVPDKCKFLHQERMDVCETHLHWHTVAKETCSEKSTNLHDYGMLLPCGIDKFRGVEFVCCPLAEESDSVDSADAEEDDSDVWWGGADTDYADGGEDKVVEVAEEEEVADVEEEEADDDEDVEDGDEVEEEAEEPYEEATERTTSTATTTTTTTESVEEVVREVCSEQAETGPCRAMISRWYFDVTEGKCVPFFYGGCGGNRNNFDTEEYCMAVCGSVSTQSLLKTTSEPLPQDPDKLPTTAASTPDAVDKYLETPGDENEHAHFQKAKERLEAKHRERMSQVMREWEEAERQAKNLPKADKKAVIQHFQEKVESLEQEAANERQQLVETHMARVEAMLNDRRRLALENYITALQAVPPRPHHVFNMLKKYVRAEQKDRQHTLKHFEHVRMVDPKKAAQIRSQVMTHLRVIYERMNQSLSLLYNVPAVAEEIQDEVDELLQKEQNYSDDVLANMISEPRISYGNDALMPSLTETKTTVELLPVNGEFSLDDLQPWHPFGVDSVPANTENEVEPVDARPAADRGLTTRPGSGLTNIKTEEISEVKMDAEFGHDSGFEVRHQKLVFFAEDVGSNKGAIIGLMVGGVVIATVIVITLVMLKKKQYTSIHHGVVEVDAAVTPEERHLSKMQQNGYENPTYKFFEQMQN.

An N-terminal signal peptide occupies residues 1 to 17 (MLPSLALLLLAAWTVRA). The Extracellular portion of the chain corresponds to 18–701 (LEVPTDGNAG…AEDVGSNKGA (684 aa)). Residues 28–123 (LLAEPQIAMF…PYRCLVGEFV (96 aa)) form a GFLD subdomain region. The 162-residue stretch at 28-189 (LLAEPQIAMF…RGVEFVCCPL (162 aa)) folds into the E1 domain. 6 disulfides stabilise this stretch: cysteine 38/cysteine 62, cysteine 73/cysteine 117, cysteine 98/cysteine 105, cysteine 133/cysteine 187, cysteine 144/cysteine 174, and cysteine 158/cysteine 186. 96 to 110 (NWCKRGRKQCKTHTH) contributes to the heparin binding site. Residues 131 to 189 (DKCKFLHQERMDVCETHLHWHTVAKETCSEKSTNLHDYGMLLPCGIDKFRGVEFVCCPL) form a cuBD subdomain region. Cu(2+) is bound by residues histidine 147, histidine 151, and tyrosine 168. The tract at residues 181 to 188 (GVEFVCCP) is zinc-binding. Zn(2+) contacts are provided by glutamate 183, cysteine 186, and cysteine 187. Positions 193-207 (SDSVDSADAEEDDSD) are enriched in acidic residues. The interval 193-284 (SDSVDSADAE…TTTTTTESVE (92 aa)) is disordered. A Phosphoserine; by CK2 modification is found at serine 198. Serine 206 carries the post-translational modification Phosphoserine; by CK1. Sulfotyrosine occurs at positions 217 and 262. Residues 228 to 264 (VAEEEEVADVEEEEADDDEDVEDGDEVEEEAEEPYEE) show a composition bias toward acidic residues. Positions 268–281 (RTTSTATTTTTTTE) are enriched in low complexity. 3 cysteine pairs are disulfide-bonded: cysteine 291–cysteine 341, cysteine 300–cysteine 324, and cysteine 316–cysteine 337. The region spanning 291–341 (CSEQAETGPCRAMISRWYFDVTEGKCVPFFYGGCGGNRNNFDTEEYCMAVC) is the BPTI/Kunitz inhibitor domain. Tyrosine 336 is modified (sulfotyrosine). The OX-2 signature appears at 344–365 (VSTQSLLKTTSEPLPQDPDKLP). Residues 374 to 565 (AVDKYLETPG…EEIQDEVDEL (192 aa)) form the E2 domain. Positions 391 to 423 (FQKAKERLEAKHRERMSQVMREWEEAERQAKNL) are heparin-binding. Serine 441 carries the post-translational modification Phosphoserine. A heparin-binding region spans residues 491–522 (FNMLKKYVRAEQKDRQHTLKHFEHVRMVDPKK). Tyrosine 497 bears the Phosphotyrosine mark. Residues 523 to 540 (AAQIRSQVMTHLRVIYER) form a collagen-binding region. N-linked (GlcNAc...) asparagine glycans are attached at residues asparagine 542 and asparagine 571. Cu(2+)-binding residues include histidine 677 and histidine 685. Positions 677 and 685 each coordinate Zn(2+). Residues 695–722 (VGSNKGAIIGLMVGGVVIATVIVITLVM) are interaction with PSEN1. The chain crosses the membrane as a helical span at residues 702–722 (IIGLMVGGVVIATVIVITLVM). The Cytoplasmic segment spans residues 723 to 770 (LKKKQYTSIHHGVVEVDAAVTPEERHLSKMQQNGYENPTYKFFEQMQN). A Basolateral sorting signal motif is present at residues 724-734 (KKKQYTSIHHG). The residue at position 729 (threonine 729) is a Phosphothreonine. Position 730 is a phosphoserine; by APP-kinase I (serine 730). The interaction with G(o)-alpha stretch occupies residues 732-751 (HHGVVEVDAAVTPEERHLSK). Threonine 743 bears the Phosphothreonine; by CDK5 and MAPK10 and LRRK2 mark. An interaction with DAB2 region spans residues 756 to 770 (GYENPTYKFFEQMQN). Residues 756-770 (GYENPTYKFFEQMQN) are required for the interaction with KIF5B and for anterograde transport in axons. The residue at position 757 (tyrosine 757) is a Phosphotyrosine; by ABL1. The YENPXY motif; contains endocytosis signal motif lies at 757 to 762 (YENPTY). Lysine 763 is covalently cross-linked (Glycyl lysine isopeptide (Lys-Gly) (interchain with G-Cter in ubiquitin)).

Belongs to the APP family. As to quaternary structure, binds, via its C-terminus, to the PID domain of several cytoplasmic proteins, including APBB family members, the APBA family, MAPK8IP1, SHC1, NUMB and DAB1. Binding to DAB1 inhibits its serine phosphorylation. Interacts (via NPXY motif) with DAB2 (via PID domain); the interaction is impaired by tyrosine phosphorylation of the NPXY motif. Also interacts with GPCR-like protein BPP, APPBP1, IB1, KNS2 (via its TPR domains), APPBP2 (via BaSS) and DDB1. In vitro, it binds MAPT via the MT-binding domains. Associates with microtubules in the presence of ATP and in a kinesin-dependent manner. Interacts, through a C-terminal domain, with GNAO1. Amyloid-beta protein 42 binds CHRNA7 in hippocampal neurons. Amyloid-beta associates with HADH2. Interacts with ANKS1B and AGER. Interacts with CPEB1. Interacts with ITM2B. Interacts with ITM2C. Interacts with IDE. Can form homodimers; dimerization is enhanced in the presence of Cu(2+) ions. Can form homodimers; this is promoted by heparin binding. Amyloid-beta protein 40 interacts with S100A9. CTF-alpha product of APP interacts with GSAP. Isoform APP695 interacts with SORL1 (via N-terminal ectodomain); this interaction retains APP in the trans-Golgi network and reduces processing into soluble APP-alpha and amyloid-beta peptides. The C99 fragment also interacts with SORL1. Isoform APP751 interacts with SORL1. Isoform APP770 interacts with SORL1. Interacts with PLD3. Interacts with VDAC1. Interacts with NSG1; could regulate APP processing. Amyloid-beta protein 42 interacts with FPR2. Interacts with SYT7. Interacts (via transmembrane region) with PSEN1; the interaction is direct. Interacts with LRRK2. Interacts (via cytoplasmic domain) with KIF5B. Interacts (via C-terminus) with APBB2/FE65L1 (via C-terminus). Interacts (via intracellular domain) with APBB3. Post-translationally, proteolytically processed under normal cellular conditions. Cleavage either by alpha-secretase, beta-secretase or theta-secretase leads to generation and extracellular release of soluble APP peptides, S-APP-alpha and S-APP-beta, and the retention of corresponding membrane-anchored C-terminal fragments, C80, C83 and C99. Subsequent processing of C80 and C83 by gamma-secretase yields P3 peptides. This is the major secretory pathway and is non-amyloidogenic. Alternatively, presenilin/nicastrin-mediated gamma-secretase processing of C99 releases the amyloid-beta proteins, amyloid-beta protein 40 and amyloid-beta protein 42, major components of amyloid plaques, and the cytotoxic C-terminal fragments, gamma-CTF(50), gamma-CTF(57) and gamma-CTF(59). PSEN1 cleavage is more efficient with C83 than with C99 as substrate (in vitro). Amyloid-beta protein 40 and Amyloid-beta protein 42 are cleaved by ACE. Many other minor amyloid-beta peptides, amyloid-beta 1-X peptides, are found in cerebral spinal fluid (CSF) including the amyloid-beta X-15 peptides, produced from the cleavage by alpha-secretase. In terms of processing, proteolytically cleaved by caspases during neuronal apoptosis. Cleavage at Asp-739 by either CASP6, CASP8 or CASP9 results in the production of the neurotoxic C31 peptide and the increased production of amyloid-beta peptides. N- and O-glycosylated. Post-translationally, phosphorylation in the C-terminal on tyrosine, threonine and serine residues is neuron-specific. Phosphorylation can affect APP processing, neuronal differentiation and interaction with other proteins. Phosphorylated on Thr-743 in neuronal cells by Cdc5 kinase and Mapk10, in dividing cells by Cdc2 kinase in a cell-cycle dependent manner with maximal levels at the G2/M phase and, in vitro, by GSK-3-beta. The Thr-743 phosphorylated form causes a conformational change which reduces binding of Fe65 family members. In dopaminergic (DA) neurons, phosphorylation on Thr-743 by LRKK2 promotes the production and the nuclear translocation of the APP intracellular domain (AICD) which induces DA neuron apoptosis. Phosphorylation on Tyr-757 is required for SHC binding. Phosphorylated in the extracellular domain by casein kinases on both soluble and membrane-bound APP. This phosphorylation is inhibited by heparin. In terms of processing, extracellular binding and reduction of copper, results in a corresponding oxidation of Cys-144 and Cys-158, and the formation of a disulfide bond. Trophic-factor deprivation triggers the cleavage of surface APP by beta-secretase to release sAPP-beta which is further cleaved to release an N-terminal fragment of APP (N-APP). Post-translationally, amyloid-beta peptides are degraded by IDE. In terms of processing, sulfated on tyrosine residues. In terms of tissue distribution, expressed in the brain with expression in cortex, cerebellum, hippocampus, olfactory bulb, neurons, astrocytes and microglia (at protein level). Expressed in the retinal lens. Expressed at a low level in muscle cells (at protein level). Expressed in kidney. As to expression, widely expressed. Expressed in several different brain regions including hippocampus, substantia nigra pars compacta and cerebellum. Within the cerebellum, abundantly expressed in Purkinje cells. In terms of tissue distribution, expressed in the brain, kidney and liver. Expressed in several different brain regions including hippocampus, substantia nigra pars compacta and cerebellum. Within the cerebellum, abundantly expressed in Purkinje cells. Expressed in several different brain regions including hippocampus, substantia nigra pars compacta and cerebellum. Within the cerebellum, abundantly expressed in Purkinje cells.

It localises to the cell membrane. The protein resides in the membrane. It is found in the perikaryon. Its subcellular location is the cell projection. The protein localises to the growth cone. It localises to the clathrin-coated pit. The protein resides in the early endosome. It is found in the cytoplasmic vesicle. Its subcellular location is the golgi apparatus. The protein localises to the trans-Golgi network. It localises to the endoplasmic reticulum. The protein resides in the secreted. It is found in the cell surface. Its subcellular location is the nucleus. The protein localises to the cytoplasm. Functions as a cell surface receptor and performs physiological functions on the surface of neurons relevant to neurite growth, neuronal adhesion and axonogenesis. Interaction between APP molecules on neighboring cells promotes synaptogenesis. Involved in cell mobility and transcription regulation through protein-protein interactions. Can promote transcription activation through binding to APBB1-KAT5 and inhibit Notch signaling through interaction with Numb. Couples to apoptosis-inducing pathways such as those mediated by G(o) and JIP. Inhibits G(o)-alpha ATPase activity. Acts as a kinesin I membrane receptor, mediating the axonal transport of beta-secretase and presenilin 1. By acting as a kinesin I membrane receptor, plays a role in axonal anterograde transport of cargo towards synapses in axons. May be involved in copper homeostasis/oxidative stress through copper ion reduction. Can regulate neurite outgrowth through binding to components of the extracellular matrix such as heparin and collagen I and IV. The splice isoforms that contain the BPTI domain possess protease inhibitor activity. Induces a AGER-dependent pathway that involves activation of p38 MAPK, resulting in internalization of amyloid-beta peptide and leading to mitochondrial dysfunction in cultured cortical neurons. Provides Cu(2+) ions for GPC1 which are required for release of nitric oxide (NO) and subsequent degradation of the heparan sulfate chains on GPC1. In terms of biological role, amyloid-beta peptides are lipophilic metal chelators with metal-reducing activity. Binds transient metals such as copper, zinc and iron. Rat and mouse amyloid-beta peptides bind only weakly transient metals and have little reducing activity due to substitutions of transient metal chelating residues. Amyloid-beta protein 42 may activate mononuclear phagocytes in the brain and elicit inflammatory responses. Promotes both tau aggregation and TPK II-mediated phosphorylation. Also binds GPC1 in lipid rafts. Its function is as follows. The gamma-CTF peptides as well as the caspase-cleaved peptides, including C31, are potent enhancers of neuronal apoptosis. The protein is Amyloid-beta precursor protein of Mus musculus (Mouse).